The sequence spans 439 residues: MKGIGNRESGIVDGQRNGASVGSVTTALPIPDSPLPIPGARKRAPRIALIAGEASGDILGAGLIEQLRLRYPNAEFVGIGGDAMRGVGCQTWFDASELAVMGLTEVLRHLPRLLKLRSAFRERVLAWKPDVFIGIDAPDFNLPVERWLKQRGIKTVHYVSPSVWAWREKRAEKIGVSADLVLCLFPMEPPIYAKHGVDARFVGHPMADDIAYQSDRAAARATLGLSASSTVLAVLPGSRHGEISRLGDTFFQAAWLVSEHLPNLHVLVPAANPGCKQLLAEQLSRSSLPVMRSHLLDGQARTAMLAADVVLLASGTATLEAMLVKRPMVVGYKVAPLTYRIVKLLGLLKVNRYALPNILANDDLAPELMQDDCTPERLCVALLDWFKHPDKVAALQPRYLALHAELRRDASARAADAVAGLLSQRESGMENRESAGAGA.

This sequence belongs to the LpxB family.

It catalyses the reaction a lipid X + a UDP-2-N,3-O-bis[(3R)-3-hydroxyacyl]-alpha-D-glucosamine = a lipid A disaccharide + UDP + H(+). It participates in bacterial outer membrane biogenesis; LPS lipid A biosynthesis. Its function is as follows. Condensation of UDP-2,3-diacylglucosamine and 2,3-diacylglucosamine-1-phosphate to form lipid A disaccharide, a precursor of lipid A, a phosphorylated glycolipid that anchors the lipopolysaccharide to the outer membrane of the cell. This Xanthomonas axonopodis pv. citri (strain 306) protein is Lipid-A-disaccharide synthase.